A 597-amino-acid chain; its full sequence is Elongation factor 4 (597 aa).

A tr-type G domain is found at 4-181; the sequence is SKIRNFSIIA…AIVDYVPAPK (178 aa). GTP is bound by residues 16-21 and 128-131; these read DHGKST and NKID.

The protein belongs to the TRAFAC class translation factor GTPase superfamily. Classic translation factor GTPase family. LepA subfamily.

Its subcellular location is the cell membrane. The enzyme catalyses GTP + H2O = GDP + phosphate + H(+). Its function is as follows. Required for accurate and efficient protein synthesis under certain stress conditions. May act as a fidelity factor of the translation reaction, by catalyzing a one-codon backward translocation of tRNAs on improperly translocated ribosomes. Back-translocation proceeds from a post-translocation (POST) complex to a pre-translocation (PRE) complex, thus giving elongation factor G a second chance to translocate the tRNAs correctly. Binds to ribosomes in a GTP-dependent manner. The chain is Elongation factor 4 from Mycoplasmopsis agalactiae (strain NCTC 10123 / CIP 59.7 / PG2) (Mycoplasma agalactiae).